The following is a 190-amino-acid chain: Potassium-transporting ATPase KdpC subunit (190 aa).

The helical transmembrane segment at 15 to 35 (LWILTALIYPAIVLVIGQLVF) threads the bilayer.

This sequence belongs to the KdpC family. In terms of assembly, the system is composed of three essential subunits: KdpA, KdpB and KdpC.

It localises to the cell inner membrane. Part of the high-affinity ATP-driven potassium transport (or Kdp) system, which catalyzes the hydrolysis of ATP coupled with the electrogenic transport of potassium into the cytoplasm. This subunit acts as a catalytic chaperone that increases the ATP-binding affinity of the ATP-hydrolyzing subunit KdpB by the formation of a transient KdpB/KdpC/ATP ternary complex. This Synechocystis sp. (strain ATCC 27184 / PCC 6803 / Kazusa) protein is Potassium-transporting ATPase KdpC subunit.